Consider the following 67-residue polypeptide: Protein AaeX (67 aa).

2 helical membrane passes run 3–23 (LFPVFVVFGLSFPPIFFELIL) and 43–63 (FVWHPALFNTALYCCLFYLIS).

It belongs to the AaeX family.

Its subcellular location is the cell membrane. In Enterobacter sp. (strain 638), this protein is Protein AaeX.